The following is a 433-amino-acid chain: D-amino acid dehydrogenase (433 aa).

Position 3–17 (3–17) interacts with FAD; sequence VLVLGSGVIGTTSAY.

Belongs to the DadA oxidoreductase family. FAD serves as cofactor.

The enzyme catalyses a D-alpha-amino acid + A + H2O = a 2-oxocarboxylate + AH2 + NH4(+). Oxidative deamination of D-amino acids. The sequence is that of D-amino acid dehydrogenase from Pseudomonas syringae pv. tomato (strain ATCC BAA-871 / DC3000).